The primary structure comprises 151 residues: Macrodomain Ter protein (151 aa).

The protein belongs to the MatP family. In terms of assembly, homodimer.

It is found in the cytoplasm. Functionally, required for spatial organization of the terminus region of the chromosome (Ter macrodomain) during the cell cycle. Prevents early segregation of duplicated Ter macrodomains during cell division. Binds specifically to matS, which is a 13 bp signature motif repeated within the Ter macrodomain. This chain is Macrodomain Ter protein, found in Cronobacter sakazakii (strain ATCC BAA-894) (Enterobacter sakazakii).